The following is a 910-amino-acid chain: Adhesion G-protein coupled receptor F1 (910 aa).

The N-terminal stretch at 1–19 is a signal peptide; it reads MKVGVLWLISFFTFTDGHG. Residues 20 to 583 lie on the Extracellular side of the membrane; it reads GFLGKNDGIK…SPFVPSTIFP (564 aa). N139, N168, N205, N282, N310, N317, N329, N354, N368, N389, N410, N423, N437, N455, N512, N528, and N553 each carry an N-linked (GlcNAc...) asparagine glycan. In terms of domain architecture, SEA spans 148 to 256; it reads ERTKIWGTFK…GSFRVFGKAQ (109 aa). Disulfide bonds link C257/C287 and C275/C299. A GAIN-B domain is found at 437 to 579; that stretch reads NKSQLKRGYS…SILMSPFVPS (143 aa). 2 cysteine pairs are disulfide-bonded: C534–C561 and C549–C563. The interval 534-579 is GPS; sequence CVFWDFSHLQWNDAGCHLVNETQDIVTCQCTHLTSFSILMSPFVPS. The segment at 568–576 is stachel; sequence SFSILMSPF. The chain crosses the membrane as a helical span at residues 584–609; it reads VVKWITYVGLGISIGSLILCLIIEAL. Residues 610–621 are Cytoplasmic-facing; it reads FWKQIKKSQTSH. The helical transmembrane segment at 622-646 threads the bilayer; sequence TRRICMVNIALSLLIADVWFIVGAT. At 647-658 the chain is on the extracellular side; that stretch reads VDTTVNPSGVCT. Cysteines 657 and 733 form a disulfide. A helical transmembrane segment spans residues 659 to 684; the sequence is AAVFFTHFFYLSLFFWMLMLGILLAY. Over 685 to 696 the chain is Cytoplasmic; that stretch reads RIILVFHHMAQH. A helical membrane pass occupies residues 697-719; it reads LMMAVGFCLGYGCPLIISVITIA. The Extracellular segment spans residues 720 to 742; that stretch reads VTQPSNTYKRKDVCWLNWSNGSK. 2 N-linked (GlcNAc...) asparagine glycosylation sites follow: N736 and N739. The chain crosses the membrane as a helical span at residues 743–767; sequence PLLAFVVPALAIVAVNFVVVLLVLT. Topologically, residues 768-784 are cytoplasmic; it reads KLWRPTVGERLSRDDKA. A helical transmembrane segment spans residues 785-813; it reads TIIRVGKSLLILTPLLGLTWGFGIGTIVD. Topologically, residues 814–816 are extracellular; sequence SQN. Residues 817–842 traverse the membrane as a helical segment; sequence LAWHVIFALLNAFQGFFILCFGILLD. Topologically, residues 843–910 are cytoplasmic; sequence SKLRQLLFNK…IMLTQFVSNE (68 aa).

It belongs to the G-protein coupled receptor 2 family. Adhesion G-protein coupled receptor (ADGR) subfamily. In terms of assembly, heterodimer of 2 chains generated by proteolytic processing; the large extracellular N-terminal fragment and the membrane-bound C-terminal fragment predominantly remain associated and non-covalently linked. In terms of processing, autoproteolytically processed at the GPS region of the GAIN-B domain; this cleavage modulates receptor activity. Post-translationally, glycosylated. Glycosylation at Asn-389 is required for secretion or folding. Mainly expressed in the kidney. Up-regulated in lung adenocarcinomas and prostate cancers.

The protein resides in the cell membrane. It is found in the secreted. With respect to regulation, forms a heterodimer of 2 chains generated by proteolytic processing that remain associated through non-covalent interactions mediated by the GAIN-B domain. In the inactivated receptor, the Stachel sequence (also named stalk) is embedded in the GAIN-B domain, where it adopts a beta-strand conformation. On activation, the Stachel moves into the 7 transmembrane region and adopts a twisted hook-shaped configuration that forms contacts within the receptor, leading to coupling of a G-alpha protein, which activates signaling. The cleaved GAIN-B and N-terminal domains can then dissociate from the rest of the receptor. Adhesion G-protein coupled receptor (aGPCR) for N-docosahexaenoylethanolamine (synaptamide), an omega-3 fatty acid lipid highly enriched in the brain. Ligand binding causes a conformation change that triggers signaling via guanine nucleotide-binding proteins (G proteins) and modulates the activity of downstream effectors, such as adenylate cyclase. ADGRF1 is coupled to G(s) G proteins and mediates activation of adenylate cyclase activity. Also able to couple to G(q), G(i) and G(12)/G(13) G proteins; additional evidence is however required to confirm this result in vivo. Involved in the development of neurons and cognitive function. In liver, involved in fat accumulation. The sequence is that of Adhesion G-protein coupled receptor F1 from Homo sapiens (Human).